Reading from the N-terminus, the 224-residue chain is UPF0758 protein AHA_0160 (224 aa).

The region spanning 102-224 (PLTSPQLTRD…TVSFAERGWL (123 aa)) is the MPN domain. Residues H173, H175, and D186 each contribute to the Zn(2+) site. The JAMM motif motif lies at 173-186 (HNHPSGVAEPSRAD).

Belongs to the UPF0758 family.

This chain is UPF0758 protein AHA_0160, found in Aeromonas hydrophila subsp. hydrophila (strain ATCC 7966 / DSM 30187 / BCRC 13018 / CCUG 14551 / JCM 1027 / KCTC 2358 / NCIMB 9240 / NCTC 8049).